A 466-amino-acid polypeptide reads, in one-letter code: Soluble pyridine nucleotide transhydrogenase (466 aa).

An FAD-binding site is contributed by glutamate 36–cysteine 45.

The protein belongs to the class-I pyridine nucleotide-disulfide oxidoreductase family. The cofactor is FAD.

The protein localises to the cytoplasm. The enzyme catalyses NAD(+) + NADPH = NADH + NADP(+). Conversion of NADPH, generated by peripheral catabolic pathways, to NADH, which can enter the respiratory chain for energy generation. The sequence is that of Soluble pyridine nucleotide transhydrogenase from Colwellia psychrerythraea (strain 34H / ATCC BAA-681) (Vibrio psychroerythus).